The chain runs to 438 residues: Histidinol dehydrogenase (438 aa).

Positions 135, 193, and 216 each coordinate NAD(+). Substrate-binding residues include serine 243, glutamine 265, and histidine 268. Zn(2+) contacts are provided by glutamine 265 and histidine 268. Residues glutamate 332 and histidine 333 each act as proton acceptor in the active site. Substrate contacts are provided by histidine 333, aspartate 366, glutamate 420, and histidine 425. Aspartate 366 serves as a coordination point for Zn(2+). Histidine 425 contributes to the Zn(2+) binding site.

Belongs to the histidinol dehydrogenase family. Requires Zn(2+) as cofactor.

It carries out the reaction L-histidinol + 2 NAD(+) + H2O = L-histidine + 2 NADH + 3 H(+). It functions in the pathway amino-acid biosynthesis; L-histidine biosynthesis; L-histidine from 5-phospho-alpha-D-ribose 1-diphosphate: step 9/9. Functionally, catalyzes the sequential NAD-dependent oxidations of L-histidinol to L-histidinaldehyde and then to L-histidine. The protein is Histidinol dehydrogenase of Shewanella oneidensis (strain ATCC 700550 / JCM 31522 / CIP 106686 / LMG 19005 / NCIMB 14063 / MR-1).